We begin with the raw amino-acid sequence, 260 residues long: CD40 ligand (260 aa).

The Cytoplasmic segment spans residues 1 to 22 (MIETYSQTAPRSVAPGPPVSMK). The helical; Signal-anchor for type II membrane protein transmembrane segment at 23 to 46 (IFMYLLTVFLITQMIGSALFAVYL) threads the bilayer. At 47 to 260 (HRRLDKIEDE…GFTSFGLLKL (214 aa)) the chain is on the extracellular side. A THD domain is found at 121-260 (VAAHVISEAS…GFTSFGLLKL (140 aa)). A disulfide bridge links Cys-177 with Cys-217. An N-linked (GlcNAc...) asparagine glycan is attached at Asn-239.

It belongs to the tumor necrosis factor family. In terms of assembly, homotrimer. Interacts with CD28. CD40 ligand, soluble form: Exists as either a monomer or a homotrimer. Forms a ternary complex between CD40 and integrins for CD40-CD40LG signaling. In terms of processing, the soluble form derives from the membrane form by proteolytic processing.

It localises to the cell membrane. The protein resides in the cell surface. The protein localises to the secreted. Functionally, cytokine that acts as a ligand to CD40/TNFRSF5. Costimulates T-cell proliferation and cytokine production. Its cross-linking on T-cells generates a costimulatory signal which enhances the production of IL4 and IL10 in conjunction with the TCR/CD3 ligation and CD28 costimulation. Induces the activation of NF-kappa-B. Induces the activation of kinases MAPK8 and PAK2 in T-cells. Mediates B-cell proliferation in the absence of co-stimulus as well as IgE production in the presence of IL4. Involved in immunoglobulin class switching. In terms of biological role, acts as a ligand for integrins, specifically ITGA5:ITGB1 and ITGAV:ITGB3; both integrins and the CD40 receptor are required for activation of CD40-CD40LG signaling, which have cell-type dependent effects, such as B-cell activation, NF-kappa-B signaling and anti-apoptotic signaling. The protein is CD40 ligand (CD40LG) of Felis catus (Cat).